Reading from the N-terminus, the 311-residue chain is Apulose-4-phosphate transketolase subunit B (311 aa).

The protein belongs to the transketolase family. Probable heterodimer composed of AptA and AptB. Thiamine diphosphate serves as cofactor.

It catalyses the reaction apulose 4-phosphate + D-glyceraldehyde 3-phosphate = D-xylulose 5-phosphate + dihydroxyacetone phosphate. Its pathway is carbohydrate metabolism. Its function is as follows. Involved in catabolism of D-apiose. Catalyzes the transfer of the glycolaldehyde group from apulose-4-phosphate to D-glyceraldehyde 3-phosphate, generating dihydroxyacetone phosphate and D-xylulose-5-phosphate. The sequence is that of Apulose-4-phosphate transketolase subunit B from Actinobacillus succinogenes (strain ATCC 55618 / DSM 22257 / CCUG 43843 / 130Z).